The chain runs to 229 residues: Peptidase E (229 aa).

Catalysis depends on charge relay system residues serine 120, aspartate 135, and histidine 157.

The protein belongs to the peptidase S51 family.

It localises to the cytoplasm. It catalyses the reaction Dipeptidase E catalyzes the hydrolysis of dipeptides Asp-|-Xaa. It does not act on peptides with N-terminal Glu, Asn or Gln, nor does it cleave isoaspartyl peptides.. Hydrolyzes dipeptides containing N-terminal aspartate residues. May play a role in allowing the cell to use peptide aspartate to spare carbon otherwise required for the synthesis of the aspartate family of amino acids. This Salmonella paratyphi A (strain AKU_12601) protein is Peptidase E.